The sequence spans 27 residues: Cupiennin-3a (27 aa).

The residue at position 27 (glutamate 27) is a Glutamic acid 1-amide.

Expressed by the venom gland.

It localises to the secreted. This chain is Cupiennin-3a, found in Cupiennius salei (American wandering spider).